The following is a 141-amino-acid chain: Putative pre-16S rRNA nuclease (141 aa).

The protein belongs to the YqgF nuclease family.

The protein resides in the cytoplasm. Functionally, could be a nuclease involved in processing of the 5'-end of pre-16S rRNA. This chain is Putative pre-16S rRNA nuclease, found in Coxiella burnetii (strain RSA 331 / Henzerling II).